The sequence spans 880 residues: Alanine--tRNA ligase (880 aa).

4 residues coordinate Zn(2+): histidine 567, histidine 571, cysteine 669, and histidine 673.

The protein belongs to the class-II aminoacyl-tRNA synthetase family. Zn(2+) is required as a cofactor.

It is found in the cytoplasm. The catalysed reaction is tRNA(Ala) + L-alanine + ATP = L-alanyl-tRNA(Ala) + AMP + diphosphate. Functionally, catalyzes the attachment of alanine to tRNA(Ala) in a two-step reaction: alanine is first activated by ATP to form Ala-AMP and then transferred to the acceptor end of tRNA(Ala). Also edits incorrectly charged Ser-tRNA(Ala) and Gly-tRNA(Ala) via its editing domain. The polypeptide is Alanine--tRNA ligase (Bacillus anthracis).